Here is a 295-residue protein sequence, read N- to C-terminus: 4-hydroxy-tetrahydrodipicolinate synthase 1 (295 aa).

Thr46 contacts pyruvate. Tyr134 acts as the Proton donor/acceptor in catalysis. Residue Lys162 is the Schiff-base intermediate with substrate of the active site. Val204 contributes to the pyruvate binding site.

The protein belongs to the DapA family. In terms of assembly, homotetramer; dimer of dimers.

Its subcellular location is the cytoplasm. It carries out the reaction L-aspartate 4-semialdehyde + pyruvate = (2S,4S)-4-hydroxy-2,3,4,5-tetrahydrodipicolinate + H2O + H(+). Its pathway is amino-acid biosynthesis; L-lysine biosynthesis via DAP pathway; (S)-tetrahydrodipicolinate from L-aspartate: step 3/4. Its function is as follows. Catalyzes the condensation of (S)-aspartate-beta-semialdehyde [(S)-ASA] and pyruvate to 4-hydroxy-tetrahydrodipicolinate (HTPA). The protein is 4-hydroxy-tetrahydrodipicolinate synthase 1 of Halalkalibacterium halodurans (strain ATCC BAA-125 / DSM 18197 / FERM 7344 / JCM 9153 / C-125) (Bacillus halodurans).